The sequence spans 375 residues: Probable mitochondrial tRNA-specific 2-thiouridylase 1 (375 aa).

Residues 7-14 and M33 contribute to the ATP site; that span reads GMSGGVDS. Residues 94 to 96 are interaction with target base in tRNA; that stretch reads VPD. Residue C99 is the Nucleophile of the active site. A disulfide bridge connects residues C99 and C205. G124 contributes to the ATP binding site. The tract at residues 154-156 is interaction with tRNA; the sequence is KDQ. Residue C205 is the Cysteine persulfide intermediate of the active site. The segment at 319–320 is interaction with tRNA; that stretch reads QR.

The protein belongs to the MnmA/TRMU family.

The protein localises to the mitochondrion. It catalyses the reaction 5-taurinomethyluridine(34) in tRNA + S-sulfanyl-L-cysteinyl-[protein] + AH2 + ATP = 5-taurinomethyl-2-thiouridine(34) in tRNA + L-cysteinyl-[protein] + A + AMP + diphosphate + H(+). Functionally, catalyzes the 2-thiolation of uridine at the wobble position (U34) of mitochondrial tRNA(Lys), tRNA(Glu) and tRNA(Gln). Required for the formation of 5-taurinomethyl-2-thiouridine (tm5s2U) of mitochondrial tRNA(Lys), tRNA(Glu), and tRNA(Gln) at the wobble position. ATP is required to activate the C2 atom of the wobble base. In Caenorhabditis elegans, this protein is Probable mitochondrial tRNA-specific 2-thiouridylase 1.